The sequence spans 416 residues: Actin-like protein 9 (416 aa).

The interval 1 to 40 is disordered; it reads MDASRPKSSESQSSLEAPRPGPNPSPNVVNKPLQRDSPGM.

It belongs to the actin family. As to quaternary structure, interacts with ACTL7A. Testis-specific.

Its subcellular location is the cytoplasmic vesicle. The protein resides in the secretory vesicle. It is found in the acrosome. It localises to the cytoplasm. The protein localises to the cytoskeleton. Its subcellular location is the perinuclear theca. Its function is as follows. Testis-specic protein that plays an important role in fusion of proacrosomal vesicles and perinuclear theca formation. The protein is Actin-like protein 9 of Homo sapiens (Human).